The sequence spans 615 residues: 1-deoxy-D-xylulose-5-phosphate synthase (615 aa).

Residues His-72 and 111–113 (GHS) each bind thiamine diphosphate. A Mg(2+)-binding site is contributed by Asp-142. Residues 143–144 (GA), Asn-171, Tyr-278, and Glu-360 contribute to the thiamine diphosphate site. Position 171 (Asn-171) interacts with Mg(2+).

The protein belongs to the transketolase family. DXPS subfamily. Homodimer. Mg(2+) is required as a cofactor. It depends on thiamine diphosphate as a cofactor.

It carries out the reaction D-glyceraldehyde 3-phosphate + pyruvate + H(+) = 1-deoxy-D-xylulose 5-phosphate + CO2. Its pathway is metabolic intermediate biosynthesis; 1-deoxy-D-xylulose 5-phosphate biosynthesis; 1-deoxy-D-xylulose 5-phosphate from D-glyceraldehyde 3-phosphate and pyruvate: step 1/1. Functionally, catalyzes the acyloin condensation reaction between C atoms 2 and 3 of pyruvate and glyceraldehyde 3-phosphate to yield 1-deoxy-D-xylulose-5-phosphate (DXP). This chain is 1-deoxy-D-xylulose-5-phosphate synthase, found in Campylobacter jejuni subsp. doylei (strain ATCC BAA-1458 / RM4099 / 269.97).